Here is an 802-residue protein sequence, read N- to C-terminus: MSFNHQEIEKKWQGYWEENKTFRTPDETEKPKFYALDMFPYPSGAGLHVGHPEGYTATDILSRMKRMQGYNVLHPMGWDAFGLPAEQYALDTGNSPAEFTEHNINTFRNQIKSLGFSYDWDREVNTTDPNYYKWTQWIFLKLFEKGLAYVDEVPVNWCPALGTVLANEEIIDGKSERGGHPVERRPMRQWMLKITAYGDRLLEDLDELDWPESLKDMQRNWIGRSEGAEVHFNIDGTDEKFTVFTTRPDTLFGASYCVLAPEHALVADITTAEQKEAVEAYINSVKMKSDLERTELAKEKTGVFTGAYAVNPVNGEKLPIWIADYVLATYGTGAVMAVPAHDERDYEFASTFNLPMKEVVKGGDITKEAYTGDGEHVNSAFLDGLNKEEAIAKMIEWLEVTSAGNQKVTYRLRDWLFSRQRYWGEPIPVIHWEDGTMTAVKEEELPLVLPKTDNIRPSGTGESPLANIDEWVNVVDPETGKKGRRETNTMPQWAGSCWYYLRYIDPNNSEALVDPEKVKQWLPVDIYIGGAEHAVLHLLYARFWHKVLYDIGVVPTKEPFQQLFNQGMILGENNEKMSKSKGNVVNPDDIVASHGADTLRLYEMFMGPLDASIAWSENGLDGARRFLDRVWRLFVQDNGELSEKITDAPNKELEKAYHQTVKKVTEDYAELRFNTAISQMMVFINDAYKAETLPKEYVEGFVKMIAPVAPHIGEELWSKLGYNETITYASWPTFDESKLVEDEVEIVVQVMGKVRAKLTMSKDASKEEMEQLALEAIKDQIEGKTVRKVIVVPGKLVNVVAN.

Residues 40–51 carry the 'HIGH' region motif; that stretch reads PYPSGAGLHVGH. The 'KMSKS' region motif lies at 576-580; that stretch reads KMSKS. Lys579 is an ATP binding site.

Belongs to the class-I aminoacyl-tRNA synthetase family.

It localises to the cytoplasm. The enzyme catalyses tRNA(Leu) + L-leucine + ATP = L-leucyl-tRNA(Leu) + AMP + diphosphate. The polypeptide is Leucine--tRNA ligase (Bacillus cereus (strain ATCC 10987 / NRS 248)).